Here is a 555-residue protein sequence, read N- to C-terminus: Zinc finger and SCAN domain-containing protein 21 (555 aa).

Disordered regions lie at residues 1-74 (MTKV…SKDK), 102-133 (TIKA…YHDT), 204-243 (LDEP…TQHV), and 263-354 (EEVF…RPAP). 3 tandem repeats follow at residues 18–56 (ESMG…QDTL), 57–95 (EPMG…QDTL), and 96–134 (EQLG…HDTP). The segment at 18–134 (ESMGPSPIKV…FRQFGYHDTP (117 aa)) is 3 X 39 AA approximate tandem repeats. A Glycyl lysine isopeptide (Lys-Gly) (interchain with G-Cter in SUMO2) cross-link involves residue K26. The region spanning 122 to 204 (RQRFRQFGYH…TLLEDLEQEL (83 aa)) is the SCAN box domain. The span at 210–240 (QVSSPPNEQKQSWEKMSTSGTAMESLSSTET) shows a compositional bias: polar residues. A compositionally biased stretch (basic and acidic residues) spans 280–302 (PQKEDSADEHRSSEEESHADGLK). Glycyl lysine isopeptide (Lys-Gly) (interchain with G-Cter in SUMO2) cross-links involve residues K302 and K313. Residues 316 to 332 (SRSERQWANNLERERGT) show a composition bias toward basic and acidic residues. C2H2-type zinc fingers lie at residues 359-381 (YICA…RRTH), 387-409 (YVCT…YRTH), 415-436 (YDCK…QRMH), 442-464 (YQCK…YRIH), 470-492 (YQCN…QRLH), 498-520 (YKCK…HRIH), and 526-548 (YWCS…QRVH). A Glycyl lysine isopeptide (Lys-Gly) (interchain with G-Cter in SUMO2) cross-link involves residue K431.

This sequence belongs to the krueppel C2H2-type zinc-finger protein family. Expressed predominantly in the spermatocytes and spermatids of adult testes. It is also present at lower levels in the ovary, brain, spleen, embryo and fetus.

Its subcellular location is the nucleus. In terms of biological role, strong transcriptional activator. Plays an important role in spermatogenesis; essential for the progression of meiotic prophase I in spermatocytes. The sequence is that of Zinc finger and SCAN domain-containing protein 21 (Zscan21) from Mus musculus (Mouse).